Consider the following 749-residue polypeptide: Transcription factor RFX3 (749 aa).

The segment at residues histidine 183–proline 258 is a DNA-binding region (RFX-type winged-helix). Positions valine 663–leucine 699 are disordered. Positions serine 674–serine 688 are enriched in acidic residues.

Belongs to the RFX family. In terms of assembly, heterodimer; heterodimerizes with RFX1 and RFX2, and RFX6.

The protein resides in the nucleus. Its function is as follows. Transcription factor required for ciliogenesis and islet cell differentiation during endocrine pancreas development. Essential for the differentiation of nodal monocilia and left-right asymmetry specification during embryogenesis. Required for the biogenesis of motile cilia by governing growth and beating efficiency of motile cells. Also required for ciliated ependymal cell differentiation. Regulates the expression of genes involved in ciliary assembly (DYNC2LI1, FOXJ1 and BBS4) and genes involved in ciliary motility (DNAH11, DNAH9 and DNAH5). Together with RFX6, participates in the differentiation of 4 of the 5 islet cell types during endocrine pancreas development, with the exception of pancreatic PP (polypeptide-producing) cells. Regulates transcription by forming a heterodimer with another RFX protein and binding to the X-box in the promoter of target genes. Represses transcription of MAP1A in non-neuronal cells but not in neuronal cells. This chain is Transcription factor RFX3 (RFX3), found in Homo sapiens (Human).